The following is a 211-amino-acid chain: Uracil phosphoribosyltransferase (211 aa).

5-phospho-alpha-D-ribose 1-diphosphate contacts are provided by residues arginine 78, arginine 103, and 130-138 (DPMLATGGT). Residues isoleucine 195 and 200-202 (GDA) contribute to the uracil site. Aspartate 201 serves as a coordination point for 5-phospho-alpha-D-ribose 1-diphosphate.

The protein belongs to the UPRTase family. Mg(2+) is required as a cofactor.

The catalysed reaction is UMP + diphosphate = 5-phospho-alpha-D-ribose 1-diphosphate + uracil. Its pathway is pyrimidine metabolism; UMP biosynthesis via salvage pathway; UMP from uracil: step 1/1. With respect to regulation, allosterically activated by GTP. Functionally, catalyzes the conversion of uracil and 5-phospho-alpha-D-ribose 1-diphosphate (PRPP) to UMP and diphosphate. The chain is Uracil phosphoribosyltransferase from Streptomyces avermitilis (strain ATCC 31267 / DSM 46492 / JCM 5070 / NBRC 14893 / NCIMB 12804 / NRRL 8165 / MA-4680).